The following is a 446-amino-acid chain: Adenylosuccinate synthetase (446 aa).

Residues 12-18 (GDEGKGK) and 40-42 (GHT) each bind GTP. Catalysis depends on D13, which acts as the Proton acceptor. Residues D13 and G40 each coordinate Mg(2+). IMP is bound by residues 13-16 (DEGK), 38-41 (NAGH), T128, R142, Q223, T238, and R302. The active-site Proton donor is the H41. 298–304 (TTTGRRR) is a substrate binding site. GTP is bound by residues R304, 330–332 (KLD), and 412–414 (SLG).

It belongs to the adenylosuccinate synthetase family. As to quaternary structure, homodimer. The cofactor is Mg(2+).

It is found in the cytoplasm. The catalysed reaction is IMP + L-aspartate + GTP = N(6)-(1,2-dicarboxyethyl)-AMP + GDP + phosphate + 2 H(+). It participates in purine metabolism; AMP biosynthesis via de novo pathway; AMP from IMP: step 1/2. Its function is as follows. Plays an important role in the de novo pathway of purine nucleotide biosynthesis. Catalyzes the first committed step in the biosynthesis of AMP from IMP. This Acaryochloris marina (strain MBIC 11017) protein is Adenylosuccinate synthetase.